We begin with the raw amino-acid sequence, 398 residues long: S-adenosylmethionine synthase (398 aa).

Histidine 16 contributes to the ATP binding site. Aspartate 18 contributes to the Mg(2+) binding site. K(+) is bound at residue glutamate 44. Residues glutamate 57 and glutamine 100 each coordinate L-methionine. A flexible loop region spans residues 100-110 (QSPDIAQGVNE). ATP-binding positions include 175-177 (DAK), 242-243 (RF), aspartate 251, 257-258 (RK), alanine 274, and lysine 278. Residue aspartate 251 coordinates L-methionine. Lysine 282 is an L-methionine binding site.

It belongs to the AdoMet synthase family. As to quaternary structure, homotetramer; dimer of dimers. The cofactor is Mg(2+). Requires K(+) as cofactor.

It localises to the cytoplasm. The enzyme catalyses L-methionine + ATP + H2O = S-adenosyl-L-methionine + phosphate + diphosphate. The protein operates within amino-acid biosynthesis; S-adenosyl-L-methionine biosynthesis; S-adenosyl-L-methionine from L-methionine: step 1/1. Functionally, catalyzes the formation of S-adenosylmethionine (AdoMet) from methionine and ATP. The overall synthetic reaction is composed of two sequential steps, AdoMet formation and the subsequent tripolyphosphate hydrolysis which occurs prior to release of AdoMet from the enzyme. The protein is S-adenosylmethionine synthase of Streptococcus agalactiae serotype III (strain NEM316).